A 50-amino-acid polypeptide reads, in one-letter code: Omwaprin-a (50 aa).

In terms of domain architecture, WAP spans 3–47 (RPKKPGLCPPRPQKPCVKECKNDDSCPGQQKCCNYGCKDECRDPI). Cystine bridges form between C10–C35, C18–C39, C22–C34, and C28–C43.

This sequence belongs to the venom waprin family. Expressed by the venom gland.

The protein localises to the secreted. In terms of biological role, damages membranes of susceptible bacteria. Has antibacterial activity against the Gram-positive bacteria B.megaterium and S.warneri. After a 45-minute treatment with this protein, B.megaterium have no visible pili and are smooth. Has no antibacterial activity against the Gram-positive bacteria B.thuringiensis, S.aureus, S.clavuligerus and B.anthracis, or the Gram-negative bacteria E.coli and A.tumefaciens. Has no hemolytic activity. Does not inhibit the proteinases elastase and cathepsin G. Is not toxic to mice. This chain is Omwaprin-a, found in Oxyuranus microlepidotus (Inland taipan).